The chain runs to 456 residues: MLTDREVISTLDMLRNEHLDVRTVTLGISLFDCASDNFDRFATRVQDKISRYAEHLVATCDEVGEKYGIPVVNKRISISPMAVVGAPFGPDDMVRAAQVLDKAACNAGVDFLGGFTALVEKGMTKGDRALIDALPEALATTGRVCSSVNVGSSRSGINMDAVALMGDTIVQIAGRTADRDGIGCAKLVVFTNIPQDVPFMAGAYLGTGEPDVVINVGVSGPGVVKKAIDRAMQSGDRSLGDIAEVIKRTAFKVTRVGEIIGREVAERLGVPFGVADLSLAPAPQVGDSVGEIFQSVGLASIGVPGSTAVLAMLNDAVKKGGAFASSHVGGLSGAFIPVSEDLNIAEAAATGRLTLEKLEAMTSVCSVGLDMVAIPGDTPAATIAAIIADEMAIGMINNKTTAVRIIPVPGKKAGDTVSFGGLLGESAIMPVPGSGGSEKFIRLGGRMPAPIHSLKN.

Belongs to the UPF0210 family. In terms of assembly, homodimer.

This is UPF0210 protein Dde_3704 from Oleidesulfovibrio alaskensis (strain ATCC BAA-1058 / DSM 17464 / G20) (Desulfovibrio alaskensis).